Reading from the N-terminus, the 185-residue chain is Ribosome maturation factor RimM (185 aa).

One can recognise a PRC barrel domain in the interval 96 to 171 (EDEFYHSDLL…VITIDPPEDV (76 aa)). The tract at residues 165–185 (IDPPEDVGSKAEEEGGGAPDD) is disordered.

This sequence belongs to the RimM family. As to quaternary structure, binds ribosomal protein uS19.

The protein localises to the cytoplasm. An accessory protein needed during the final step in the assembly of 30S ribosomal subunit, possibly for assembly of the head region. Essential for efficient processing of 16S rRNA. May be needed both before and after RbfA during the maturation of 16S rRNA. It has affinity for free ribosomal 30S subunits but not for 70S ribosomes. The sequence is that of Ribosome maturation factor RimM from Maricaulis maris (strain MCS10) (Caulobacter maris).